Reading from the N-terminus, the 283-residue chain is MRQYLNLCQRIIDQGHWVENERTGKRCLTVINADLTYDVANNQFPLITTRKSYWKAAIAEFLGYIRGYDNAADFRKLGTKTWDANANENQAWLNNPVRKGTDDMGRVYGVQGRRWRKPNGETVDQLRKIVNNLSKGIDDRGEILTFFNPGEIDLGCLRPCMHTHTFSLLGDTLYLTSYQRSCDVPLGLNFNQIQVFTFLALMAQITGKKAGQAYHKIINAHIYEDQFELMRDVQLKREPFPLPRLEINPDIKTLEDLETWVTMDDFKVIGYQCHEAIKYPFSV.

Residue arginine 22 coordinates dUMP. Residue cysteine 160 is the Nucleophile of the active site. DUMP is bound by residues 180-183 (RSCD), asparagine 191, and 221-223 (HIY). Aspartate 183 provides a ligand contact to (6R)-5,10-methylene-5,6,7,8-tetrahydrofolate. Serine 282 lines the (6R)-5,10-methylene-5,6,7,8-tetrahydrofolate pocket.

It belongs to the thymidylate synthase family. Bacterial-type ThyA subfamily. In terms of assembly, homodimer.

Its subcellular location is the cytoplasm. It catalyses the reaction dUMP + (6R)-5,10-methylene-5,6,7,8-tetrahydrofolate = 7,8-dihydrofolate + dTMP. Its pathway is pyrimidine metabolism; dTTP biosynthesis. In terms of biological role, catalyzes the reductive methylation of 2'-deoxyuridine-5'-monophosphate (dUMP) to 2'-deoxythymidine-5'-monophosphate (dTMP) while utilizing 5,10-methylenetetrahydrofolate (mTHF) as the methyl donor and reductant in the reaction, yielding dihydrofolate (DHF) as a by-product. This enzymatic reaction provides an intracellular de novo source of dTMP, an essential precursor for DNA biosynthesis. This Histophilus somni (strain 129Pt) (Haemophilus somnus) protein is Thymidylate synthase.